The sequence spans 623 residues: Hemagglutinin component HA-70 type D (623 aa).

In terms of assembly, botulinum toxins are produced as large progenitor toxins of 12S (M toxin, about 280 kDa) and 16S (L toxin, about 650 kDa). M toxin consists of a non-toxic, non-hemagglutinin component (NTNHA) and the neurotoxin (BoNT/D). L toxin consists of the M toxin and the 3 hemagglutinin (HA) subcomponents of 70, 33, and 17 kDa. The stoichiometry of the whole complex has been modeled as one BoNT/D, one NTNHA, three HA-70, six HA-33 and three HA-17. HA-33 and HA-17 crystallize as a heterotrimer with two HA-33 and one HA-17. In terms of processing, limited treatment of L toxin with pepsin or trypsin produces shorter HA-70 proteins (called HA-55, HA-23 and HA-22) sometimes observed in vivo in other strains of type C and D botulinum toxin preparations.

The protein resides in the secreted. In terms of biological role, the hemagglutinin (HA) component of the progenitor toxin protects the structural integrity of the neurotoxin; may increase internalization of the neurotoxin into the bloodstream of the host. Involved in binding to the small intestine through interactions with glycolipids and glycoproteins containing sialic acid moieties. Erythrocyte agglutination only occurs when the entire complex is assembled. This HA subunit probably connects toxin/NTNHA to HA-33 and HA-17, the other components of the HA complex, and it may also protect the M toxin from proteolysis upon secretion. The protein is Hemagglutinin component HA-70 type D of Clostridium botulinum D phage (Clostridium botulinum D bacteriophage).